We begin with the raw amino-acid sequence, 1185 residues long: Zinc finger SWIM domain-containing protein 5 (1185 aa).

A compositionally biased stretch (basic and acidic residues) spans 1–10; it reads MADGGEREEL. Disordered regions lie at residues 1-45 and 123-153; these read MADG…GGAG and AGAAGGAAGASPAEEGPQPPPGAAAPAGSAP. An SWIM-type zinc finger spans residues 219 to 256; the sequence is YKVAISFDRCKITSVTCGCGNKDIFYCAHVVALSLYRI.

The chain is Zinc finger SWIM domain-containing protein 5 (ZSWIM5) from Homo sapiens (Human).